We begin with the raw amino-acid sequence, 210 residues long: Prolactin (210 aa).

The first 23 residues, 1–23 (MAEGSRLYFAVTVLMCAFVSING), serve as a signal peptide directing secretion. Cystine bridges form between C69–C183 and C200–C210.

Belongs to the somatotropin/prolactin family. Pituitary gland.

Its subcellular location is the secreted. The polypeptide is Prolactin (prl) (Hypophthalmichthys nobilis (Bighead carp)).